A 38-amino-acid chain; its full sequence is ATP synthase subunit O, mitochondrial (38 aa).

It belongs to the ATPase delta chain family. In terms of assembly, F-type ATPases have 2 components, CF(1) - the catalytic core - and CF(0) - the membrane proton channel. CF(1) has five subunits: alpha(3), beta(3), gamma(1), delta(1), epsilon(1). CF(0) has three main subunits: a, b and c.

The protein resides in the mitochondrion. It localises to the mitochondrion inner membrane. In terms of biological role, mitochondrial membrane ATP synthase (F(1)F(0) ATP synthase or Complex V) produces ATP from ADP in the presence of a proton gradient across the membrane which is generated by electron transport complexes of the respiratory chain. F-type ATPases consist of two structural domains, F(1) - containing the extramembraneous catalytic core and F(0) - containing the membrane proton channel, linked together by a central stalk and a peripheral stalk. During catalysis, ATP synthesis in the catalytic domain of F(1) is coupled via a rotary mechanism of the central stalk subunits to proton translocation. Part of the complex F(0) domain and the peripheric stalk, which acts as a stator to hold the catalytic alpha(3)beta(3) subcomplex and subunit a/ATP6 static relative to the rotary elements. The protein is ATP synthase subunit O, mitochondrial of Pisum sativum (Garden pea).